A 379-amino-acid chain; its full sequence is Homoserine O-acetyltransferase (379 aa).

The AB hydrolase-1 domain maps to 52–356 (NVVMVLHALT…IRGHDGFLVE (305 aa)). The active-site Nucleophile is the Ser157. Residue Arg227 participates in substrate binding. Active-site residues include Asp320 and His350. Residue Asp351 participates in substrate binding.

The protein belongs to the AB hydrolase superfamily. MetX family. Homodimer.

Its subcellular location is the cytoplasm. The enzyme catalyses L-homoserine + acetyl-CoA = O-acetyl-L-homoserine + CoA. The protein operates within amino-acid biosynthesis; L-methionine biosynthesis via de novo pathway; O-acetyl-L-homoserine from L-homoserine: step 1/1. Functionally, transfers an acetyl group from acetyl-CoA to L-homoserine, forming acetyl-L-homoserine. The protein is Homoserine O-acetyltransferase of Mycobacterium ulcerans (strain Agy99).